We begin with the raw amino-acid sequence, 231 residues long: Cuticlin 2 (231 aa).

An N-terminal signal peptide occupies residues 1–16; that stretch reads MQKLIVFFTTIAAAQA. A run of 12 repeats spans residues 75 to 78, 79 to 82, 90 to 93, 105 to 108, 114 to 117, 121 to 124, 137 to 140, 153 to 156, 169 to 172, 192 to 195, 208 to 211, and 218 to 221. The segment at 75 to 221 is 12 X 4 AA repeats of A-A-P-[AVI]; that stretch reads AAPIAAPAGG…AGGYQAAAPA (147 aa).

Tyrosine residues can be cross-linked in vitro, leading to the formation of insoluble high molecular-weight complexes.

It localises to the secreted. Functionally, component of the insoluble part of the cuticles. The chain is Cuticlin 2 from Caenorhabditis elegans.